Reading from the N-terminus, the 1100-residue chain is Formin-like protein 1 (1100 aa).

Low complexity predominate over residues 1-13 (MGNAAGSAEQPAG). 4 disordered regions span residues 1–31 (MGNA…PMPA), 167–200 (STDN…PKSR), 446–474 (RFSE…TRPS), and 510–635 (TPSG…AKKP). A lipid anchor (N-myristoyl glycine) is attached at G2. S7 carries the phosphoserine modification. Over residues 14 to 28 (PAAPPPKQPAPPKQP) the composition is skewed to pro residues. A GBD/FH3 domain is found at 27–468 (QPMPAAGELE…PPEPEKAPPA (442 aa)). A Phosphoserine modification is found at S184. A compositionally biased stretch (low complexity) spans 517–538 (PTPGVPTGSPSPDLAPAAEPAP). The span at 539 to 615 (GAAPPPPPPL…PPPPPPPGGP (77 aa)) shows a compositional bias: pro residues. Phosphoserine is present on residues S624 and S693. In terms of domain architecture, FH2 spans 632-1023 (AKKPIQTKFR…QEAGADTPGK (392 aa)). The tract at residues 1008-1037 (KKEAAAQEAGADTPGKGEPPAPKSPPKARR) is disordered. The segment covering 1013-1023 (AQEAGADTPGK) has biased composition (low complexity). S1031 carries the phosphoserine modification. The region spanning 1059–1090 (SDRDGAIEDIITVIKTVPFTARTGKRTSRLLC) is the DAD domain.

It belongs to the formin homology family. Interacts with RAC1, PFN1 and PFN2. Interacts (activated by RAC1) with SRGAP2 (via SH3 domain); regulates the actin filament severing activity of FMNL1. Myristoylation mediates membrane localization and blebbing. Expressed in heart, brain, placenta, lung, liver, skeletal muscle, kidney and pancreas.

The protein resides in the cytoplasm. It is found in the cell membrane. It localises to the cytoplasmic vesicle. The protein localises to the phagosome. Its subcellular location is the cell cortex. The protein resides in the cell projection. It is found in the bleb. Its function is as follows. May play a role in the control of cell motility and survival of macrophages. Plays a role in the regulation of cell morphology and cytoskeletal organization. Required in the cortical actin filament dynamics and cell shape. This chain is Formin-like protein 1 (FMNL1), found in Homo sapiens (Human).